We begin with the raw amino-acid sequence, 69 residues long: MGGGGHGGGITYKGVTVHTPKTWHTVTGKGLCAVMWFWILYRAKQDGPVVMGWRHPWDGHGDHGHGDHH.

Belongs to the complex I NDUFB2 subunit family. Complex I is composed of at least 49 different subunits.

It is found in the mitochondrion inner membrane. Its function is as follows. Accessory subunit of the mitochondrial membrane respiratory chain NADH dehydrogenase (Complex I), that is believed not to be involved in catalysis. Complex I functions in the transfer of electrons from NADH to the respiratory chain. The immediate electron acceptor for the enzyme is believed to be ubiquinone. This chain is NADH dehydrogenase [ubiquinone] 1 beta subcomplex subunit 2, found in Arabidopsis thaliana (Mouse-ear cress).